The sequence spans 467 residues: L-histidine transporter HutT (467 aa).

A run of 13 helical transmembrane segments spans residues 18-38 (FMALGSAIGTGLFYGSASAIQ), 39-59 (MAGPAVLLAYLIGGAAVFMVM), 71-91 (VAGSFGHYATTYLGPMAGFIL), 99-119 (MVIVAIADVTAFGIYMGFWFP), 125-145 (IWVLGIVFLIGGLNLCNVKVF), 155-175 (LKVGAIVAMILAGLGIMAFGF), 200-220 (VGGLIASFAVVMFAFGGIEII), 245-265 (ILLFYVLTLFVLMCLYPWPQI), 280-300 (GIGSAAAVLNVVVISAAISAI), 334-354 (WMTVVVMGAALLIGVLLNYLI), 358-378 (VFLLIASIATFATVWVWLMIL), 402-422 (FWPYGPAMAIAFMVFIFGVLG), and 429-449 (AALIVGVIWVVFLVASYLLWC).

This sequence belongs to the amino acid-polyamine-organocation (APC) superfamily. Amino acid transporter (AAT) (TC 2.A.3.1) family.

Its subcellular location is the cell inner membrane. The enzyme catalyses L-histidine(out) + n H(+)(out) = L-histidine(in) + n H(+)(in). Its activity is regulated as follows. Transport activity is inhibited by the proton ionophores carbonyl cyanide m-chlorophenyl hydrazine (CCCP) and 2,4-dinitrophenol (DNP), but not by valinomycin, nigericin and nonactin. Uptake is reduced in the presence of the sulfhydryl reagent N-ethylmaleimide (NEM). Uptake is not affected by arginine, lysine, proline or compounds structurally related to histidine such as imidazole, 3-amino-1,2,4-triazole and urocanate. Only 1,2,4-triazolyl-3-alanine reduces the rate of L-histidine uptake significantly. In terms of biological role, major high-affinity histidine transporter. Binds and catalyzes the uptake of histidine into the cell. Functions as an histidine:proton symporter with high specificity for histidine. The sequence is that of L-histidine transporter HutT from Pseudomonas putida (strain ATCC 47054 / DSM 6125 / CFBP 8728 / NCIMB 11950 / KT2440).